Here is a 322-residue protein sequence, read N- to C-terminus: Mas-related G-protein coupled receptor member X1 (322 aa).

At 1 to 31 (MDPTISTLDTELTPINGTEETLCYKQTLSLT) the chain is on the extracellular side. The N-linked (GlcNAc...) asparagine glycan is linked to Asn-16. The chain crosses the membrane as a helical span at residues 32–52 (VLTCIVSLVGLTGNAVVLWLL). Topologically, residues 53–67 (GCRMRRNAFSIYILN) are cytoplasmic. Residues 68–88 (LAAADFLFLSGRLIYSLLSFI) traverse the membrane as a helical segment. The Extracellular segment spans residues 89 to 96 (SIPHTISK). The helical transmembrane segment at 97 to 117 (ILYPVMMFSYFAGLSFLSAVS) threads the bilayer. Topologically, residues 118 to 144 (TERCLSVLWPIWYRCHRPTHLSAVVCV) are cytoplasmic. The chain crosses the membrane as a helical span at residues 145–165 (LLWALSLLRSILEWMLCGFLF). Topologically, residues 166–177 (SGADSAWCQTSD) are extracellular. A helical transmembrane segment spans residues 178–198 (FITVAWLIFLCVVLCGSSLVL). Topologically, residues 199–221 (LIRILCGSRKIPLTRLYVTILLT) are cytoplasmic. Residues 222-242 (VLVFLLCGLPFGIQFFLFLWI) form a helical membrane-spanning segment. The Extracellular segment spans residues 243–254 (HVDREVLFCHVH). The helical transmembrane segment at 255–275 (LVSIFLSALNSSANPIIYFFV) threads the bilayer. Over 276 to 322 (GSFRQRQNRQNLKLVLQRALQDASEVDEGGGQLPEEILELSGSRLEQ) the chain is Cytoplasmic.

It belongs to the G-protein coupled receptor 1 family. Mas subfamily. In terms of tissue distribution, uniquely localized in a subset of small dorsal root and trigeminal sensory neurons.

Its subcellular location is the cell membrane. Functionally, orphan receptor. Probably involved in the function of nociceptive neurons. May regulate nociceptor function and/or development, including the sensation or modulation of pain. Potently activated by enkephalins including BAM22 (bovine adrenal medulla peptide 22) and BAM (8-22). BAM22 is the most potent compound and evoked a large and dose-dependent release of intracellular calcium in stably transfected cells. G(alpha)q proteins are involved in the calcium-signaling pathway. Activated by the antimalarial drug, chloroquine. May mediate chloroquine-induced itch, in a histamine-independent manner. This is Mas-related G-protein coupled receptor member X1 (MRGPRX1) from Homo sapiens (Human).